A 232-amino-acid polypeptide reads, in one-letter code: 2-C-methyl-D-erythritol 4-phosphate cytidylyltransferase (232 aa).

The protein belongs to the IspD/TarI cytidylyltransferase family. IspD subfamily.

The enzyme catalyses 2-C-methyl-D-erythritol 4-phosphate + CTP + H(+) = 4-CDP-2-C-methyl-D-erythritol + diphosphate. Its pathway is isoprenoid biosynthesis; isopentenyl diphosphate biosynthesis via DXP pathway; isopentenyl diphosphate from 1-deoxy-D-xylulose 5-phosphate: step 2/6. Functionally, catalyzes the formation of 4-diphosphocytidyl-2-C-methyl-D-erythritol from CTP and 2-C-methyl-D-erythritol 4-phosphate (MEP). This is 2-C-methyl-D-erythritol 4-phosphate cytidylyltransferase from Neorickettsia sennetsu (strain ATCC VR-367 / Miyayama) (Ehrlichia sennetsu).